Reading from the N-terminus, the 202-residue chain is MADPRVEELPDEEVPKTNVEDAGSDSESEAGEEPTIPGGAAVAVHSRNEKKARKAIGKLGLKLVPGITRVTFRRPKNILFVINQPEVYRSPSSNTWIIFGEAKIEDLNAQAQASAAQQLAAQEAAQEHAGHEHEDILGKAKEPEAEKKEAEEDDGEEVDESGLEAKDIELVMAQANVSRKKAVKALRENDNDIVNSIMALSI.

Basic and acidic residues predominate over residues 1–19 (MADPRVEELPDEEVPKTNV). The interval 1–44 (MADPRVEELPDEEVPKTNVEDAGSDSESEAGEEPTIPGGAAVAV) is disordered. The segment covering 22–32 (AGSDSESEAGE) has biased composition (acidic residues). An NAC-A/B domain is found at 46-111 (SRNEKKARKA…AKIEDLNAQA (66 aa)). Residues 118 to 165 (QLAAQEAAQEHAGHEHEDILGKAKEPEAEKKEAEEDDGEEVDESGLEA) are disordered. Residues 125-150 (AQEHAGHEHEDILGKAKEPEAEKKEA) show a composition bias toward basic and acidic residues. The segment covering 151-162 (EEDDGEEVDESG) has biased composition (acidic residues). Residues 163–202 (LEAKDIELVMAQANVSRKKAVKALRENDNDIVNSIMALSI) enclose the UBA domain.

This sequence belongs to the NAC-alpha family. Part of the nascent polypeptide-associated complex (NAC), consisting of egd2 and egd1. NAC associates with ribosomes via egd1.

The protein resides in the cytoplasm. Its subcellular location is the nucleus. Component of the nascent polypeptide-associated complex (NAC), a dynamic component of the ribosomal exit tunnel, protecting the emerging polypeptides from interaction with other cytoplasmic proteins to ensure appropriate nascent protein targeting. The NAC complex also promotes mitochondrial protein import by enhancing productive ribosome interactions with the outer mitochondrial membrane and blocks the inappropriate interaction of ribosomes translating non-secretory nascent polypeptides with translocation sites in the membrane of the endoplasmic reticulum. Egd2 may also be involved in transcription regulation. The chain is Nascent polypeptide-associated complex subunit alpha (egd2) from Aspergillus terreus (strain NIH 2624 / FGSC A1156).